The following is a 496-amino-acid chain: GTPase Der (496 aa).

EngA-type G domains lie at 3 to 166 (PVIA…VGKF) and 209 to 382 (VKLA…TCAT). Residues 9-16 (GRPNVGKS), 56-60 (DTGGI), 118-121 (NKTD), 215-222 (GRPNVGKS), 262-266 (DTAGV), and 327-330 (NKWD) each bind GTP. The region spanning 383-467 (RRVGTSMLTR…PIRIQFKEGE (85 aa)) is the KH-like domain.

The protein belongs to the TRAFAC class TrmE-Era-EngA-EngB-Septin-like GTPase superfamily. EngA (Der) GTPase family. Associates with the 50S ribosomal subunit.

GTPase that plays an essential role in the late steps of ribosome biogenesis. The protein is GTPase Der of Proteus mirabilis (strain HI4320).